A 1392-amino-acid polypeptide reads, in one-letter code: MEVLMAERANLVFHNKAIDGTAMKRLISRLIEHFGMAYTSHILDQVKTLGFQQATATSISLGIDDLLTIPSKGWLVQDAEQQSLILEKHHHYGNVHAVEKLRQSIEIWYATSEYLRQEMNPNFRMTDPFNPVHIMSFSGARGNASQVHQLVGMRGLMSDPQGQMIDLPIQSNLREGLSLTEYIISCYGARKGVVDTAVRTSDAGYLTRRLVEVVQHIVVRRTDCGTARGISVSPRNGIMPERIFSQTLIGRVLADDIYMGSRCIATRNQAIGIGLVNRFITFRAQPISIRTPFTCRSTSWICRLCYGRSPTHGDLVELGEAVGIIAGQSIGEPGTQLTLRTFHTGGVFTGGTAEHVRAPSNGKIKFNEDLVHPTRTRHGHPAFLCSIDLYVTIESEDILHNVNIPPKSLLLVQNDQYVESEQVIAEIRAGISTLNFKEKVRKHIYSDSDGEMHWSTDVYHAPEFTYGNVHLLPKTSHLWILLGGPCRSSLVYLSIHKDQDQMNAHSLSGKRRYTSNLSVTNDQARQKLFSSDFYGQKEDRIPDYSDLNRIICTGQYNLVYSPILHGNSDLLSKRRRNKFIIPLHSIQELENELMPCSGISIEIPVNGIFRRNSILAYFDDPRYRRKSSGIIKYGTIETHSVIKKEDLIEYRGVKEFRPKYQMKVDRFFFIPEEVHILPGSSSIMVRNNSIVGVDTQITLNLRSRVGGLVRVERKKKRIELKIFSGDIHFPGETDKISRHTGVLIPPGTGKRNSKEYKKVKNWIYVQRITPSKKRFFVLVRPVVTYEITDGINLGTLFPPDPLQERDNVQLRIVNYILYGNGKPIRGISDTSIQLVRTCLVLNWNQDKKSSSCEEARASFVEIRTNGLIRHFLRINLVKSPISYIGKRNDPSGSGLLSDNGSDCTNINPFSAIYSYPKAKIQQSLNQPQGTIHTLLNRNKECQSLIILSAANCSRMEPFKDVKYHSVIKESIKKDPLIPIRNSLGPLGTCLPIENFYSSYHLITHNQILVTKYLQLDNLKQTFQVIKLKYYLMDENGKIFNPDPCRNIILNPVNLNWSFLHHNYCAETSKIISLGQFICENVCIAENGPPLKSGQFILVQVDSIVIRSAKPYLATPGATVHGHYGETLNQGNTLVTFIYEKSISDDITQGLPKVEQVLEVRSIDSISMNLEKRVESWNKCIPRILGIPWGFLIGAELTIAQSRISLVNKIQQVYRSQGVQIHNRHIEIIVRQITSKVLISEDGMSNVFSPGELIGLLRAERMGRALEEAICYRVVLLGITRASLNTQSFISEASFQETARVLAKAALRGRIDWLKGLKENVVLGGVIPVGTGFKGLVHPSKQHNNIPLETKKTNLFEGEMRDILFHHRKLFDSCLSKKFHDIPEQSFIGFNDS.

Positions 224, 295, 302, and 305 each coordinate Zn(2+).

The protein belongs to the RNA polymerase beta' chain family. RpoC2 subfamily. As to quaternary structure, in plastids the minimal PEP RNA polymerase catalytic core is composed of four subunits: alpha, beta, beta', and beta''. When a (nuclear-encoded) sigma factor is associated with the core the holoenzyme is formed, which can initiate transcription. The cofactor is Zn(2+).

It localises to the plastid. Its subcellular location is the chloroplast. It carries out the reaction RNA(n) + a ribonucleoside 5'-triphosphate = RNA(n+1) + diphosphate. In terms of biological role, DNA-dependent RNA polymerase catalyzes the transcription of DNA into RNA using the four ribonucleoside triphosphates as substrates. The protein is DNA-directed RNA polymerase subunit beta'' of Solanum tuberosum (Potato).